The chain runs to 55 residues: Accessory gland-specific peptide 70A (55 aa).

Positions 1–19 (MKTLALFLVLVCVLGLVQS) are cleaved as a signal peptide. Residues 20–33 (WEWPWNRKPTKFPI) form an essential for binding to sperm region. A hydroxyproline mark is found at Pro-28 and Pro-32. Isoleucine derivative is present on Ile-33. A hydroxyproline mark is found at Pro-34, Pro-36, and Pro-38. The tract at residues 36 to 55 (PNPRDKWCRLNLGPAWGGRC) is sufficient to induce PMR. Cysteines 43 and 55 form a disulfide.

Belongs to the Drosophila sex peptide family. Post-translationally, sperm-bound protein is cleaved to release an active C-terminal peptide. Gradual release from stored sperm may function to prolong PMR and enhance male reproductive success. In terms of tissue distribution, main cells of the accessory glands of males (paragonial gland).

The protein localises to the secreted. Its function is as follows. Male seminal protein which triggers short- and long-term post-mating behavioral responses (PMR) in female Drosophila. Binds initially to sperm where it is later cleaved to release an active peptide within the female reproductive tract. Signals via the sex peptide receptor (SPR) in female flies; may also act via other receptors. Moderates the activity of distinct neuronal circuitries in the female genital tract to promote specific PMRs including: enhanced ovulation, increased egg laying rate, increased feeding/foraging rate, induced antimicrobial peptide synthesis, reduced mating receptivity, reduced day-time sleep and reduced lifespan in multiple mated females. This chain is Accessory gland-specific peptide 70A (SP), found in Drosophila melanogaster (Fruit fly).